Reading from the N-terminus, the 216-residue chain is 4-hydroxy-tetrahydrodipicolinate reductase (216 aa).

NAD(+) contacts are provided by residues 9 to 12 (SGRM), 71 to 73 (GTT), and 95 to 98 (AYNF). Histidine 127 (proton donor/acceptor) is an active-site residue. Residue histidine 128 coordinates (S)-2,3,4,5-tetrahydrodipicolinate. Residue lysine 131 coordinates NAD(+). Lysine 131 acts as the Proton donor in catalysis. 137 to 138 (GT) provides a ligand contact to (S)-2,3,4,5-tetrahydrodipicolinate.

It belongs to the DapB family. As to quaternary structure, homotetramer.

It is found in the cytoplasm. The enzyme catalyses (S)-2,3,4,5-tetrahydrodipicolinate + NAD(+) + H2O = (2S,4S)-4-hydroxy-2,3,4,5-tetrahydrodipicolinate + NADH + H(+). It carries out the reaction (S)-2,3,4,5-tetrahydrodipicolinate + NADP(+) + H2O = (2S,4S)-4-hydroxy-2,3,4,5-tetrahydrodipicolinate + NADPH + H(+). Its pathway is amino-acid biosynthesis; L-lysine biosynthesis via DAP pathway; (S)-tetrahydrodipicolinate from L-aspartate: step 4/4. Is inhibited by high concentrations of NADH. Its function is as follows. Catalyzes the conversion of 4-hydroxy-tetrahydrodipicolinate (HTPA) to tetrahydrodipicolinate. Uses NADPH as a reductant with much more efficiency than NADH. The sequence is that of 4-hydroxy-tetrahydrodipicolinate reductase from Thermotoga maritima (strain ATCC 43589 / DSM 3109 / JCM 10099 / NBRC 100826 / MSB8).